Consider the following 208-residue polypeptide: Small ribosomal subunit protein uS4 (208 aa).

An S4 RNA-binding domain is found at 98-160 (SRLDNVAYNM…AKSYLRIKSS (63 aa)).

This sequence belongs to the universal ribosomal protein uS4 family. In terms of assembly, part of the 30S ribosomal subunit. Contacts protein S5. The interaction surface between S4 and S5 is involved in control of translational fidelity.

Its function is as follows. One of the primary rRNA binding proteins, it binds directly to 16S rRNA where it nucleates assembly of the body of the 30S subunit. In terms of biological role, with S5 and S12 plays an important role in translational accuracy. The sequence is that of Small ribosomal subunit protein uS4 from Nitrosomonas eutropha (strain DSM 101675 / C91 / Nm57).